A 338-amino-acid polypeptide reads, in one-letter code: Ribonucleoside-diphosphate reductase small subunit (338 aa).

Fe cation-binding residues include Asp81, Glu112, and His115. The active site involves Tyr119. Positions 174, 208, and 211 each coordinate Fe cation.

It belongs to the ribonucleoside diphosphate reductase small chain family. In terms of assembly, heterodimer of a large and a small subunit. Fe cation serves as cofactor.

It is found in the cytoplasm. The catalysed reaction is a 2'-deoxyribonucleoside 5'-diphosphate + [thioredoxin]-disulfide + H2O = a ribonucleoside 5'-diphosphate + [thioredoxin]-dithiol. In terms of biological role, provides the precursors necessary for DNA synthesis. Catalyzes the biosynthesis of deoxyribonucleotides from the corresponding ribonucleotides. The polypeptide is Ribonucleoside-diphosphate reductase small subunit (rnrB-1) (Dictyostelium discoideum (Social amoeba)).